A 387-amino-acid chain; its full sequence is Phosphoglycerate kinase (387 aa).

Residues 21–23 (DLN), Arg36, 59–62 (HLGR), Arg113, and Arg146 each bind substrate. ATP-binding positions include Lys197, Glu314, and 340 to 343 (GGDT).

The protein belongs to the phosphoglycerate kinase family. Monomer.

Its subcellular location is the cytoplasm. It catalyses the reaction (2R)-3-phosphoglycerate + ATP = (2R)-3-phospho-glyceroyl phosphate + ADP. It participates in carbohydrate degradation; glycolysis; pyruvate from D-glyceraldehyde 3-phosphate: step 2/5. The chain is Phosphoglycerate kinase from Pseudomonas fluorescens (strain Pf0-1).